Here is a 118-residue protein sequence, read N- to C-terminus: Small ribosomal subunit protein uS13 (118 aa).

The segment at 93-118 (RGLPVRGQRTKTNARTRKGPRKPIRK) is disordered.

It belongs to the universal ribosomal protein uS13 family. Part of the 30S ribosomal subunit. Forms a loose heterodimer with protein S19. Forms two bridges to the 50S subunit in the 70S ribosome.

In terms of biological role, located at the top of the head of the 30S subunit, it contacts several helices of the 16S rRNA. In the 70S ribosome it contacts the 23S rRNA (bridge B1a) and protein L5 of the 50S subunit (bridge B1b), connecting the 2 subunits; these bridges are implicated in subunit movement. Contacts the tRNAs in the A and P-sites. This Pseudomonas fluorescens (strain ATCC BAA-477 / NRRL B-23932 / Pf-5) protein is Small ribosomal subunit protein uS13.